Consider the following 504-residue polypeptide: Pyrichalasin C-7 hydroxylase (504 aa).

The signal sequence occupies residues 1–17 (MLNSAACIVLAITAVLG). Cys-449 lines the heme pocket.

This sequence belongs to the cytochrome P450 family. It depends on heme as a cofactor.

It participates in mycotoxin biosynthesis. Its function is as follows. Cytochrome P450 monooxygenase; part of the gene cluster that mediates the biosynthesis of the mycotoxin pyrichalasin H, a tyrosine-derived cytochalasan that inhibits the growth of rice seedlings, but also inhibits lymphocyte capping and actin polymerization and alters cell morphology. Pyrichalasin H is indicated as the responsible agent for the genus-specific pathogenicity of M.grisea toward crabgrass. The first step in the pathway is catalyzed by the O-methyltransferase pyiA which methylates free tyrosine to generate the precursor O-methyltyrosine. The hybrid PKS-NRPS pyiS, assisted by the enoyl reductase pyiC, are responsible for fusion of the O-methyltyrosine precursor and the polyketide backbone. The polyketide synthase module (PKS) of pyiS is responsible for the synthesis of the polyketide backbone and the downstream nonribosomal peptide synthetase (NRPS) amidates the carboxyl end of the polyketide with the O-methyltyrosine precursor. As the NRPS A-domain demonstrates substrate tolerance, pyiS can also use phenylalanine, tyrosine and even para-chlorophenylalanine as amino acid precursor, which leads to the production of novel cytochalasans, including halogenated cytochalasans. Because pyiS lacks a designated enoylreductase (ER) domain, the required activity is provided the enoyl reductase pyiC. Reduction by the hydrolyase pyiE leads to 1,5-dihydropyrrolone, which is substrate for dehydration and intra-molecular Diels-Alder cyclization by the Diels-Alderase pyiF to yield the required isoindolone-fused macrocycle. The tailoring cytochrome P450 monooxygenases piyD and piyG catalyze the hydroxylation at C-18 and C-7, respectivily, whereas the short-chain dehydrogenase/reductase pyiH reduces the carbonyl at C-21 in preparation for the transfer of an acetyl group by the acetyltransferase pyiB. These 3 reactions whose order is not clear yet, lead to the production of O-methylpyrichalasin J, a deacetylated pyrichalasin H. Finally, pyiB to converts O-methylpyrichalasin J into the final product pyrichalasin H via acetylation of C-21. This is Pyrichalasin C-7 hydroxylase from Pyricularia grisea (Crabgrass-specific blast fungus).